The chain runs to 451 residues: MDKFEKWLNKTLMPLASKMNKNHFISALSEAFMRCMPLTLGIALLTIIGYFPVPAWVDFLNSIGLAQHFSAVIGAVTSALAIYVTYNFAYSYVNRHEYNGHTAGLLSIASLLMLMPQIITVPVVKNIPTEFPKSAVVDSVSNVEAFQTVYTGSTGLIVAIIIGFIVSLVYIQLSKRNLVIKLPAGVPPMVVDSLSPAIISMVIFCLMFGIRVGFSYTPFHDIFNFSTQLIQAPLTGAVANPWVLMGIFTFGNFLWFFGIHPNLIGGILNPLLLTMSYANIDAYAAGKPVPYLQMMIVFAVGANAWGGSGNTYGLVISMFTAKSERYKQLLKLGAIPSIFNISEPLLFGLPMMLNPLFFIPLVFQPAILGTVALGLAKILYITNLNPMTALLPWTTPAPVRMAISGGLPFLIIFAICLVLNVLIYYPFFKVAYNKALEEEKAAVELEGSETA.

The 420-residue stretch at 8-427 folds into the PTS EIIC type-3 domain; that stretch reads LNKTLMPLAS…VLNVLIYYPF (420 aa). 11 helical membrane-spanning segments follow: residues 40–60, 69–89, 104–124, 151–171, 190–210, 239–259, 263–283, 296–316, 332–352, 356–376, and 403–423; these read LGIA…VDFL, FSAV…YNFA, GLLS…VPVV, TGST…LVYI, VVDS…MFGI, ANPW…FFGI, LIGG…IDAY, IVFA…GLVI, LGAI…LPMM, LFFI…LGLA, and ISGG…NVLI.

The protein resides in the cell membrane. The phosphoenolpyruvate-dependent sugar phosphotransferase system (PTS), a major carbohydrate active transport system, catalyzes the phosphorylation of incoming sugar substrates concomitant with their translocation across the cell membrane. Involved in galactose transport with PtcA and PtcB. This Lactococcus lactis subsp. cremoris (strain MG1363) protein is PTS system galactose-specific EIIC component.